Here is a 100-residue protein sequence, read N- to C-terminus: Small ribosomal subunit protein uS14c (100 aa).

It belongs to the universal ribosomal protein uS14 family. Part of the 30S ribosomal subunit.

Its subcellular location is the plastid. The protein resides in the chloroplast. In terms of biological role, binds 16S rRNA, required for the assembly of 30S particles. The sequence is that of Small ribosomal subunit protein uS14c from Chlamydomonas reinhardtii (Chlamydomonas smithii).